Here is a 347-residue protein sequence, read N- to C-terminus: Histone deacetylase 11 (347 aa).

Residues 14–318 (KRWPIVYSPR…ARIIADSILN (305 aa)) form a histone deacetylase region. The active site involves His143.

The protein belongs to the histone deacetylase family. As to quaternary structure, interacts with HDAC6.

It localises to the nucleus. It catalyses the reaction N(6)-acetyl-L-lysyl-[histone] + H2O = L-lysyl-[histone] + acetate. Functionally, responsible for the deacetylation of lysine residues on the N-terminal part of the core histones (H2A, H2B, H3 and H4). Histone deacetylation gives a tag for epigenetic repression and plays an important role in transcriptional regulation, cell cycle progression and developmental events. Histone deacetylases act via the formation of large multiprotein complexes. The polypeptide is Histone deacetylase 11 (Hdac11) (Mus musculus (Mouse)).